The following is a 578-amino-acid chain: SCARECROW-LIKE protein 7 (578 aa).

Positions 18–29 (VIQQQQQQQQQQ) are enriched in low complexity. Disordered stretches follow at residues 18–84 (VIQQ…LAYG) and 146–173 (PPPP…APRP). Residues 49 to 61 (PHHHQQKHHHHHQ) show a composition bias toward basic residues. A compositionally biased stretch (low complexity) spans 62–74 (QMPAMPQAPPSSH). Pro residues predominate over residues 146–156 (PPPPVPSPPPT). Residues 157-173 (HAAATATATAATAAPRP) show a composition bias toward low complexity. A GRAS domain is found at 198–578 (SADASCSAPI…RPLLTVSAWR (381 aa)). The segment at 205 to 264 (APILQSLLSCSRAAATDPGLAAAELASVRAAATDAGDPSERLAFYFADALSRRLACGTGA) is leucine repeat I (LRI). The VHIID stretch occupies residues 283–349 (YKTLNDACPY…GKPTRIRITG (67 aa)). The VHIID motif lies at 314-318 (IHIVD). Residues 365–397 (ATNTRLRDFAKLLGVDFEFVPLLRPVHELNKSD) are leucine repeat II (LRII). The PFYRE stretch occupies residues 406-497 (VAVNFMLQLY…RWMFGERIQR (92 aa)). An LXXLL motif motif is present at residues 414–418 (LYHLL). The SAW stretch occupies residues 500–578 (GPEEGADRTE…RPLLTVSAWR (79 aa)).

Belongs to the GRAS family. In terms of assembly, homodimer.

Its subcellular location is the nucleus. Its function is as follows. Probable transcription factor involved in plant development. Involved in environmental abiotic stress resistance. May increase the expression of stress-responsive genes. Binds DNA in vitro. This is SCARECROW-LIKE protein 7 from Oryza sativa subsp. japonica (Rice).